The primary structure comprises 207 residues: 8-oxoguanine DNA glycosylase/AP lyase (207 aa).

Residues lysine 129 and aspartate 147 contribute to the active site.

The protein belongs to the type-2 OGG1 family.

It catalyses the reaction 2'-deoxyribonucleotide-(2'-deoxyribose 5'-phosphate)-2'-deoxyribonucleotide-DNA = a 3'-end 2'-deoxyribonucleotide-(2,3-dehydro-2,3-deoxyribose 5'-phosphate)-DNA + a 5'-end 5'-phospho-2'-deoxyribonucleoside-DNA + H(+). Functionally, catalyzes the excision of an oxidatively damaged form of guanine (7,8-dihydro-8-oxoguanine = 8-oxoG) from DNA. Also cleaves the DNA backbone at apurinic/apyrimidinic sites (AP sites). This is 8-oxoguanine DNA glycosylase/AP lyase from Thermotoga sp. (strain RQ2).